Consider the following 241-residue polypeptide: 3-deoxy-D-manno-octulosonic acid kinase (241 aa).

Asp171 is a catalytic residue.

It belongs to the protein kinase superfamily. KdkA/RfaP family.

It localises to the cell inner membrane. The catalysed reaction is an alpha-Kdo-(2-&gt;6)-lipid IVA + ATP = a 4-O-phospho-alpha-Kdo-(2-&gt;6)-lipid IVA + ADP + H(+). It participates in bacterial outer membrane biogenesis; LPS core biosynthesis. Catalyzes the ATP-dependent phosphorylation of the 3-deoxy-D-manno-octulosonic acid (Kdo) residue in Kdo-lipid IV(A) at the 4-OH position. In Haemophilus influenzae (strain 86-028NP), this protein is 3-deoxy-D-manno-octulosonic acid kinase.